Here is a 218-residue protein sequence, read N- to C-terminus: Protein THO1 (218 aa).

Residues 4 to 38 enclose the SAP domain; sequence YSSLTVVQLKDLLTKRNLSVGGLKNELVQRLIKDD. Residue Ser22 is modified to Phosphoserine. Disordered stretches follow at residues 37–123 and 177–218; these read DDEE…LSPE and LVSR…GYRR. The segment covering 47–57 has biased composition (polar residues); the sequence is VSPQEQNQEQG. Phosphoserine is present on residues Ser58 and Ser68. Basic and acidic residues predominate over residues 72 to 96; it reads TEKKEVSSEPKETNEPKEENKDVQK. 2 stretches are compositionally biased toward low complexity: residues 102–122 and 186–203; these read SATA…ALSP and SGNN…NNRS. The span at 204–218 shows a compositional bias: basic residues; that stretch reads RVSKNRRGNRSGYRR.

The protein belongs to the SAP domain-containing ribonucleoprotein family. Interacts with SUB2 in the presence of RNA; this interaction facilitates RNA binding of SUB2.

Functionally, facilitates RNA binding of SUB2 and likely plays a role in mRNA export. Suppressor of the transcriptional defect of HPR1 by overexpression. The chain is Protein THO1 (THO1) from Saccharomyces cerevisiae (strain ATCC 204508 / S288c) (Baker's yeast).